The following is a 32-amino-acid chain: Zinc metalloproteinase/disintegrin-like CdtV1 (32 aa).

2 cysteine pairs are disulfide-bonded: Cys-5–Cys-14 and Cys-7–Cys-15.

The protein belongs to the venom metalloproteinase (M12B) family. P-II subfamily. P-IIa sub-subfamily. As to quaternary structure, monomer. In terms of tissue distribution, expressed by the venom gland.

It localises to the secreted. In terms of biological role, snake venom metalloproteinase that impairs hemostasis in the envenomed animal. The protein is Zinc metalloproteinase/disintegrin-like CdtV1 of Crotalus durissus terrificus (South American rattlesnake).